Consider the following 207-residue polypeptide: MKPLTPRQQQVFDLIKSKIEVTGMPPTRAEIARELGFRSANAAEEHLKALARKQVIEIVPGASRGIRILLEEEAANDEPGLPLIGRVAAGEPILAQEHVEMHYQVDPSMFRPQADFLLRVHGESMKDIGIMDGDLLAVHKTQDVRNGQVVVARVEDDVTVKRLERKGSTVLLHAENEEFAPIEVDLTSQQLTIEGIAVGIIRNTDWM.

Positions 28-48 (RAEIARELGFRSANAAEEHLK) form a DNA-binding region, H-T-H motif. Active-site for autocatalytic cleavage activity residues include serine 124 and lysine 161.

Belongs to the peptidase S24 family. In terms of assembly, homodimer.

The enzyme catalyses Hydrolysis of Ala-|-Gly bond in repressor LexA.. Represses a number of genes involved in the response to DNA damage (SOS response), including recA and lexA. In the presence of single-stranded DNA, RecA interacts with LexA causing an autocatalytic cleavage which disrupts the DNA-binding part of LexA, leading to derepression of the SOS regulon and eventually DNA repair. In Vibrio vulnificus (strain CMCP6), this protein is LexA repressor.